We begin with the raw amino-acid sequence, 89 residues long: Alpha-ketoglutarate dehydrogenase subunit 4, mitochondrial (89 aa).

The protein belongs to the alpha-ketoglutarate dehydrogenase component 4 family. In terms of assembly, component of the 2-oxoglutarate dehydrogenase complex (OGDC), also called alpha-ketoglutarate dehydrogenase (KGDH) complex. The copmplex is composed of the catalytic subunits OGDH (2-oxoglutarate dehydrogenase kgd1; also called E1 subunit), DLST (dihydrolipoamide succinyltransferase kgd2; also called E2 subunit) and DLD (dihydrolipoamide dehydrogenase dld1; also called E3 subunit), and the assembly factor KGD4. Within OGDC, interacts (via N-terminus) with E3 subunit and (via C-terminus) with the complex core formed by E1 and E2 subunits.

It is found in the mitochondrion. Molecular adapter that is necessary to a form a stable 2-oxoglutarate dehydrogenase enzyme complex (OGDC). Required for incorporation of the E3 subunit (dld1) into the E1-E2 core (kgd1-kgd2) of mitochondrial OGDC, and acting as a stability factor for the fully assembled complex. This chain is Alpha-ketoglutarate dehydrogenase subunit 4, mitochondrial (kgd4), found in Schizosaccharomyces pombe (strain 972 / ATCC 24843) (Fission yeast).